The following is a 591-amino-acid chain: Aspartate--tRNA(Asp/Asn) ligase (591 aa).

Glu-174 is an L-aspartate binding site. Residues Gln-198–Lys-201 form an aspartate region. Residue Arg-220 participates in L-aspartate binding. ATP is bound by residues Arg-220 to Glu-222 and Gln-229. Position 450 (His-450) interacts with L-aspartate. Glu-483 contributes to the ATP binding site. Arg-490 provides a ligand contact to L-aspartate. Gly-535 to Arg-538 provides a ligand contact to ATP.

Belongs to the class-II aminoacyl-tRNA synthetase family. Type 1 subfamily. As to quaternary structure, homodimer.

It is found in the cytoplasm. The enzyme catalyses tRNA(Asx) + L-aspartate + ATP = L-aspartyl-tRNA(Asx) + AMP + diphosphate. In terms of biological role, aspartyl-tRNA synthetase with relaxed tRNA specificity since it is able to aspartylate not only its cognate tRNA(Asp) but also tRNA(Asn). Reaction proceeds in two steps: L-aspartate is first activated by ATP to form Asp-AMP and then transferred to the acceptor end of tRNA(Asp/Asn). The polypeptide is Aspartate--tRNA(Asp/Asn) ligase (Ectopseudomonas mendocina (strain ymp) (Pseudomonas mendocina)).